Consider the following 523-residue polypeptide: Sialate O-acetylesterase (523 aa).

Residues 1–23 (MVAPGLVLGLVLPLILWADRSAG) form the signal peptide. N-linked (GlcNAc...) asparagine glycosylation is found at Asn107, Asn138, Asn267, Asn290, Asn401, and Asn422.

In terms of tissue distribution, widely expressed with high expression in the testis, prostate, and colon.

Its subcellular location is the lysosome. The protein localises to the cytoplasm. The enzyme catalyses N-acetyl-9-O-acetylneuraminate + H2O = N-acetylneuraminate + acetate + H(+). The catalysed reaction is an Ac-O-9-sialoglycoconjugate + H2O = a sialoglycoconjugate + acetate + H(+). Catalyzes the removal of O-acetyl ester groups from position 9 of the free diacetylated sialate N-acetyl-9-O-acetylneuraminate (Neu5,9Ac2) in the cytosol and of the diacetylated sialate residues of sialylglycoconjugates in the lysosomes. Together with the sialate-O-acetyltransferase they regulate the balance of acetylated sialoglycoconjugates, key players in various processes such as cell-cell interactions, host-pathogen recognition, and tumor antigenicity. This is Sialate O-acetylesterase (SIAE) from Homo sapiens (Human).